Consider the following 75-residue polypeptide: MLVLKRKQGEAIHIGDDVTLTVLAIEGDQVKLGIDAPRHIDIHRHEVYIQMQEENESARNSANLMKQMIQKQSEA.

This sequence belongs to the CsrA/RsmA family. As to quaternary structure, homodimer; the beta-strands of each monomer intercalate to form a hydrophobic core, while the alpha-helices form wings that extend away from the core.

It is found in the cytoplasm. Functionally, a translational regulator that binds mRNA to regulate translation initiation and/or mRNA stability. Usually binds in the 5'-UTR at or near the Shine-Dalgarno sequence preventing ribosome-binding, thus repressing translation. Its main target seems to be the major flagellin gene, while its function is anatagonized by FliW. The chain is Translational regulator CsrA from Exiguobacterium sp. (strain ATCC BAA-1283 / AT1b).